The chain runs to 1054 residues: Probable sucrose-phosphate synthase 1 (1054 aa).

Residues 104–115 (RLERERGRREAV) are compositionally biased toward basic and acidic residues. 3 disordered regions span residues 104–125 (RLERERGRREAVADMSEDLSEG), 674–693 (LRNEEDDDENSESDSPSDSL), and 708–727 (DGDKNESREKGGGSHPDDRA).

It belongs to the glycosyltransferase 1 family. In terms of assembly, homodimer or homotetramer.

The enzyme catalyses beta-D-fructose 6-phosphate + UDP-alpha-D-glucose = sucrose 6(F)-phosphate + UDP + H(+). The protein operates within glycan biosynthesis; sucrose biosynthesis; sucrose from D-fructose 6-phosphate and UDP-alpha-D-glucose: step 1/2. With respect to regulation, activity is regulated by phosphorylation and moderated by concentration of metabolites and light. Its function is as follows. Plays a role in photosynthetic sucrose synthesis by catalyzing the rate-limiting step of sucrose biosynthesis from UDP-glucose and fructose- 6-phosphate. Involved in the regulation of carbon partitioning in the leaves of plants. May regulate the synthesis of sucrose and therefore play a major role as a limiting factor in the export of photoassimilates out of the leaf. Plays a role for sucrose availability that is essential for plant growth and fiber elongation. The polypeptide is Probable sucrose-phosphate synthase 1 (SPS1) (Craterostigma plantagineum (Blue gem)).